A 127-amino-acid chain; its full sequence is Mini-ribonuclease 3-like protein (127 aa).

Residue D19 is part of the active site.

It belongs to the MrnC RNase family.

Might be a ribonuclease involved in RNA processing. This Ilyobacter polytropus (strain ATCC 51220 / DSM 2926 / LMG 16218 / CuHBu1) protein is Mini-ribonuclease 3-like protein (mrnCL).